Here is a 456-residue protein sequence, read N- to C-terminus: Bifunctional protein GlmU (456 aa).

A pyrophosphorylase region spans residues 1–229 (MSNSSMSVVI…LSEVEGVNNR (229 aa)). UDP-N-acetyl-alpha-D-glucosamine-binding positions include 11 to 14 (LAAG), Lys-25, Gln-76, 81 to 82 (GT), 103 to 105 (YGD), Gly-140, Glu-154, Asn-169, and Asn-227. Asp-105 is a Mg(2+) binding site. Residue Asn-227 participates in Mg(2+) binding. A linker region spans residues 230-250 (LQLAALERVYQSEQAEKLLLA). Positions 251 to 456 (GVMLLDPARF…QGWQRPIKKK (206 aa)) are N-acetyltransferase. Positions 333 and 351 each coordinate UDP-N-acetyl-alpha-D-glucosamine. Catalysis depends on His-363, which acts as the Proton acceptor. UDP-N-acetyl-alpha-D-glucosamine is bound by residues Tyr-366 and Asn-377. Acetyl-CoA contacts are provided by residues Ala-380, 386–387 (NY), Ser-405, Ala-423, and Arg-440.

In the N-terminal section; belongs to the N-acetylglucosamine-1-phosphate uridyltransferase family. The protein in the C-terminal section; belongs to the transferase hexapeptide repeat family. As to quaternary structure, homotrimer. It depends on Mg(2+) as a cofactor.

It is found in the cytoplasm. It carries out the reaction alpha-D-glucosamine 1-phosphate + acetyl-CoA = N-acetyl-alpha-D-glucosamine 1-phosphate + CoA + H(+). It catalyses the reaction N-acetyl-alpha-D-glucosamine 1-phosphate + UTP + H(+) = UDP-N-acetyl-alpha-D-glucosamine + diphosphate. The protein operates within nucleotide-sugar biosynthesis; UDP-N-acetyl-alpha-D-glucosamine biosynthesis; N-acetyl-alpha-D-glucosamine 1-phosphate from alpha-D-glucosamine 6-phosphate (route II): step 2/2. It functions in the pathway nucleotide-sugar biosynthesis; UDP-N-acetyl-alpha-D-glucosamine biosynthesis; UDP-N-acetyl-alpha-D-glucosamine from N-acetyl-alpha-D-glucosamine 1-phosphate: step 1/1. It participates in bacterial outer membrane biogenesis; LPS lipid A biosynthesis. Functionally, catalyzes the last two sequential reactions in the de novo biosynthetic pathway for UDP-N-acetylglucosamine (UDP-GlcNAc). The C-terminal domain catalyzes the transfer of acetyl group from acetyl coenzyme A to glucosamine-1-phosphate (GlcN-1-P) to produce N-acetylglucosamine-1-phosphate (GlcNAc-1-P), which is converted into UDP-GlcNAc by the transfer of uridine 5-monophosphate (from uridine 5-triphosphate), a reaction catalyzed by the N-terminal domain. The protein is Bifunctional protein GlmU of Yersinia enterocolitica serotype O:8 / biotype 1B (strain NCTC 13174 / 8081).